The chain runs to 98 residues: NADH-ubiquinone oxidoreductase chain 4L (98 aa).

A run of 3 helical transmembrane segments spans residues 1–21 (MLPI…GVLI), 29–49 (TLLC…LMIT), and 59–79 (IPLI…ALLV).

The protein belongs to the complex I subunit 4L family. Core subunit of respiratory chain NADH dehydrogenase (Complex I) which is composed of 45 different subunits.

It is found in the mitochondrion inner membrane. It carries out the reaction a ubiquinone + NADH + 5 H(+)(in) = a ubiquinol + NAD(+) + 4 H(+)(out). Functionally, core subunit of the mitochondrial membrane respiratory chain NADH dehydrogenase (Complex I) which catalyzes electron transfer from NADH through the respiratory chain, using ubiquinone as an electron acceptor. Part of the enzyme membrane arm which is embedded in the lipid bilayer and involved in proton translocation. This is NADH-ubiquinone oxidoreductase chain 4L (MT-ND4L) from Phascogale tapoatafa (Common wambenger).